The chain runs to 242 residues: Probable transcriptional regulatory protein Bcen2424_2294 (242 aa).

It belongs to the TACO1 family.

It is found in the cytoplasm. This Burkholderia cenocepacia (strain HI2424) protein is Probable transcriptional regulatory protein Bcen2424_2294.